Here is a 392-residue protein sequence, read N- to C-terminus: Extracellular metalloproteinase 4 (392 aa).

Residues 1–9 constitute a propeptide that is removed on maturation; the sequence is VHSVVDYVS. An N-linked (GlcNAc...) asparagine glycan is attached at asparagine 176. Zn(2+) is bound at residue histidine 193. Glutamate 194 is an active-site residue. A Zn(2+)-binding site is contributed by histidine 197. Asparagine 359 and asparagine 385 each carry an N-linked (GlcNAc...) asparagine glycan.

The protein belongs to the peptidase M36 family. The cofactor is Zn(2+).

Its subcellular location is the secreted. Its function is as follows. Secreted metalloproteinase probably acting as a virulence factor. The protein is Extracellular metalloproteinase 4 (MEP4) of Trichophyton soudanense.